We begin with the raw amino-acid sequence, 682 residues long: Putative protein RhsE (682 aa).

The span at 348–360 (ENGEREKAQRRSL) shows a compositional bias: basic and acidic residues. Residues 348–372 (ENGEREKAQRRSLAETLQQEGSENG) are disordered.

It belongs to the RHS family.

Its function is as follows. Rhs elements have a nonessential function. They may play an important role in the natural ecology of the cell. The sequence is that of Putative protein RhsE (rhsE) from Escherichia coli (strain K12).